The sequence spans 178 residues: Fatty-acid and retinol-binding protein 1 (178 aa).

An N-terminal signal peptide occupies residues 1–16 (MYHQLILMALIGVIMA). Coiled coils occupy residues 67–89 (DAAL…ELRN) and 122–154 (QKLD…LKAT).

This sequence belongs to the fatty-acid and retinol-binding protein (FARBP) family. Not glycosylated.

It localises to the secreted. In terms of biological role, binds retinol and different fatty acids. The chain is Fatty-acid and retinol-binding protein 1 from Litomosoides sigmodontis (Filarial nematode worm).